We begin with the raw amino-acid sequence, 179 residues long: Enhancer of split m8 protein (179 aa).

The 56-residue stretch at 10-65 (YQKVKKPMLERQRRARMNKCLDNLKTLVAELRGDDGILRMDKAEMLESAVIFMRQQ) folds into the bHLH domain. Residues 83–116 (FKNGYMNAVNEVSRVMASTPGMSVDLGKSVMTHL) enclose the Orange domain. The interval 146-179 (DKAPLSPASSGYHSDCDSPAPSPQPMQQPLWRPW) is disordered. Residues 176–179 (WRPW) carry the WRPW motif motif.

As to quaternary structure, homodimer. Heterodimers with dpn. Transcription repression requires formation of a complex with a corepressor protein (Groucho).

The protein localises to the nucleus. Its function is as follows. Participates in the control of cell fate choice by uncommitted neuroectodermal cells in the embryo. Transcriptional repressor. Binds DNA on N-box motifs: 5'-CACNAG-3'. Part of the Notch signaling pathway. The sequence is that of Enhancer of split m8 protein from Drosophila melanogaster (Fruit fly).